The primary structure comprises 108 residues: Nucleoid-associated protein Pmen_2646 (108 aa).

Positions 1 to 25 are disordered; that stretch reads MMKGGMAGLMKQAQQMQEKMQKMQE.

This sequence belongs to the YbaB/EbfC family. Homodimer.

The protein resides in the cytoplasm. Its subcellular location is the nucleoid. Binds to DNA and alters its conformation. May be involved in regulation of gene expression, nucleoid organization and DNA protection. The sequence is that of Nucleoid-associated protein Pmen_2646 from Ectopseudomonas mendocina (strain ymp) (Pseudomonas mendocina).